The following is an 84-amino-acid chain: RNA-binding protein Hfq (84 aa).

The Sm domain maps to Asp10–Val70.

This sequence belongs to the Hfq family. In terms of assembly, homohexamer.

Its function is as follows. RNA chaperone that binds small regulatory RNA (sRNAs) and mRNAs to facilitate mRNA translational regulation in response to envelope stress, environmental stress and changes in metabolite concentrations. Also binds with high specificity to tRNAs. The chain is RNA-binding protein Hfq from Moorella thermoacetica (strain ATCC 39073 / JCM 9320).